Here is a 436-residue protein sequence, read N- to C-terminus: Citrate synthase (436 aa).

Catalysis depends on residues H311 and D370.

It belongs to the citrate synthase family. As to quaternary structure, homohexamer.

It carries out the reaction oxaloacetate + acetyl-CoA + H2O = citrate + CoA + H(+). Its pathway is carbohydrate metabolism; tricarboxylic acid cycle; isocitrate from oxaloacetate: step 1/2. Its activity is regulated as follows. Allosterically inhibited by NADH. The sequence is that of Citrate synthase (gltA) from Rickettsia prowazekii (strain Madrid E).